The chain runs to 505 residues: Aspartyl/glutamyl-tRNA(Asn/Gln) amidotransferase subunit B (505 aa).

It belongs to the GatB/GatE family. GatB subfamily. As to quaternary structure, heterotrimer of A, B and C subunits.

It carries out the reaction L-glutamyl-tRNA(Gln) + L-glutamine + ATP + H2O = L-glutaminyl-tRNA(Gln) + L-glutamate + ADP + phosphate + H(+). The enzyme catalyses L-aspartyl-tRNA(Asn) + L-glutamine + ATP + H2O = L-asparaginyl-tRNA(Asn) + L-glutamate + ADP + phosphate + 2 H(+). Functionally, allows the formation of correctly charged Asn-tRNA(Asn) or Gln-tRNA(Gln) through the transamidation of misacylated Asp-tRNA(Asn) or Glu-tRNA(Gln) in organisms which lack either or both of asparaginyl-tRNA or glutaminyl-tRNA synthetases. The reaction takes place in the presence of glutamine and ATP through an activated phospho-Asp-tRNA(Asn) or phospho-Glu-tRNA(Gln). The polypeptide is Aspartyl/glutamyl-tRNA(Asn/Gln) amidotransferase subunit B (Corynebacterium jeikeium (strain K411)).